Reading from the N-terminus, the 406-residue chain is Putative gustatory receptor 59f (406 aa).

The Cytoplasmic portion of the chain corresponds to 1 to 36 (MRSSATKGAKLKNSPRERLSSFNPQYAERYKELYRT). A helical transmembrane segment spans residues 37-57 (LFWLLLISVLANTAPITILPG). The Extracellular portion of the chain corresponds to 58–69 (CPNRFYRLVHLS). A helical membrane pass occupies residues 70 to 90 (WMILWYGLFVLGSYWEFVLVT). The Cytoplasmic portion of the chain corresponds to 91 to 99 (TQRVSLDRY). Residues 100–120 (LNAIESAIYVVHIFSIMLLTW) traverse the membrane as a helical segment. The Extracellular portion of the chain corresponds to 121 to 154 (QCRNWAPKLMTNIVTSDLNRAYTIDCNRTKRFIR). N-linked (GlcNAc...) asparagine glycosylation is present at Asn-147. A helical membrane pass occupies residues 155-175 (LQLFLVGIFACLAIFFNIWTH). Over 176–189 (KFVVYRSILSINSY) the chain is Cytoplasmic. Residues 190 to 210 (VMPNIISSISFAQYYLLLQGI) form a helical membrane-spanning segment. At 211 to 259 (AWRQRRLTEGLERELTHLHSPRISEVQKIRMHHANLIDFTKAVNRTFQY) the chain is on the extracellular side. A glycan (N-linked (GlcNAc...) asparagine) is linked at Asn-254. Residues 260-280 (SILLLFVGCFLNFNLVLFLVY) traverse the membrane as a helical segment. Topologically, residues 281–364 (QGIENPSMAD…RQHVVCGVIN (84 aa)) are cytoplasmic. Residues 365-385 (LDLKFLTTLLVASADFFIFLL) traverse the membrane as a helical segment. Residues 386–406 (QYDVTYEALSKSVQGNVTRYK) are Extracellular-facing. Asn-401 carries N-linked (GlcNAc...) asparagine glycosylation.

The protein belongs to the insect chemoreceptor superfamily. Gustatory receptor (GR) family. Gr10a subfamily. In terms of tissue distribution, expressed in the adult abdomen and wing. In larvae, is expressed in neurons of the terminal external chemosensory organ.

Its subcellular location is the cell membrane. Its function is as follows. Probable gustatory receptor which mediates acceptance or avoidance behavior, depending on its substrates. The sequence is that of Putative gustatory receptor 59f (Gr59f) from Drosophila melanogaster (Fruit fly).